The chain runs to 443 residues: Threonine/serine transporter TdcC (443 aa).

The next 11 helical transmembrane spans lie at 22–42 (TTWT…FFPI), 44–64 (AGFG…PIAF), 97–117 (GVVI…IYGV), 140–160 (FVAL…KDLM), 163–183 (VMSY…LSLI), 207–227 (ILVT…FSPI), 259–279 (ASML…FTLS), 319–339 (ASII…LGTL), 366–386 (ISMI…PNIL), 389–409 (IEAM…MYAI), and 423–443 (DNVF…YKLF).

The protein belongs to the amino acid/polyamine transporter 2 family. SdaC/TdcC subfamily.

The protein resides in the cell inner membrane. The catalysed reaction is L-threonine(in) + H(+)(in) = L-threonine(out) + H(+)(out). It carries out the reaction L-serine(in) + H(+)(in) = L-serine(out) + H(+)(out). In terms of biological role, involved in the import of threonine and serine into the cell, with the concomitant import of a proton (symport system). The sequence is that of Threonine/serine transporter TdcC from Salmonella newport (strain SL254).